The chain runs to 443 residues: Xaa-Pro dipeptidase (443 aa).

The Mn(2+) site is built by D246, D257, H339, E384, and E423.

This sequence belongs to the peptidase M24B family. Bacterial-type prolidase subfamily. Mn(2+) is required as a cofactor.

It catalyses the reaction Xaa-L-Pro dipeptide + H2O = an L-alpha-amino acid + L-proline. In terms of biological role, splits dipeptides with a prolyl residue in the C-terminal position. The chain is Xaa-Pro dipeptidase from Cronobacter sakazakii (strain ATCC BAA-894) (Enterobacter sakazakii).